A 420-amino-acid polypeptide reads, in one-letter code: Glutamate-1-semialdehyde 2,1-aminomutase (420 aa).

Lys-261 carries the N6-(pyridoxal phosphate)lysine modification.

This sequence belongs to the class-III pyridoxal-phosphate-dependent aminotransferase family. HemL subfamily. Pyridoxal 5'-phosphate is required as a cofactor.

The protein localises to the cytoplasm. It carries out the reaction (S)-4-amino-5-oxopentanoate = 5-aminolevulinate. The protein operates within porphyrin-containing compound metabolism; protoporphyrin-IX biosynthesis; 5-aminolevulinate from L-glutamyl-tRNA(Glu): step 2/2. The protein is Glutamate-1-semialdehyde 2,1-aminomutase of Thermoplasma volcanium (strain ATCC 51530 / DSM 4299 / JCM 9571 / NBRC 15438 / GSS1).